Consider the following 419-residue polypeptide: Maltoporin 2 (419 aa).

The first 23 residues, 1–23, serve as a signal peptide directing secretion; it reads MKTSLRTLSVALAAALVSPSVLA.

Belongs to the porin LamB (TC 1.B.3) family. In terms of assembly, homotrimer formed of three 18-stranded antiparallel beta-barrels, containing three independent channels.

Its subcellular location is the cell outer membrane. It carries out the reaction beta-maltose(in) = beta-maltose(out). Involved in the transport of maltose and maltodextrins. The sequence is that of Maltoporin 2 from Yersinia pestis bv. Antiqua (strain Antiqua).